The primary structure comprises 597 residues: C4b-binding protein alpha chain (597 aa).

Residues 1-48 (MHPPKTPSGALHRKRKMAAWPFSRLWKVSDPILFQMTLIAALLPAVLG) form the signal peptide. 8 consecutive Sushi domains span residues 49–110 (NCGP…FCIY), 111–172 (KRCR…QCEI), 173–236 (VKCK…TCEK), 237–296 (ITCR…ACEP), 297–362 (NSCI…GCEA), 363–424 (LCCP…SCGD), 425–482 (ICNF…QCKA), and 483–540 (LCRK…KCEW). Disulfide bonds link cysteine 50–cysteine 96, cysteine 81–cysteine 108, cysteine 113–cysteine 154, cysteine 140–cysteine 170, cysteine 175–cysteine 217, cysteine 203–cysteine 234, cysteine 239–cysteine 281, cysteine 267–cysteine 294, cysteine 299–cysteine 348, cysteine 332–cysteine 360, cysteine 365–cysteine 409, cysteine 399–cysteine 422, cysteine 426–cysteine 468, cysteine 454–cysteine 480, cysteine 484–cysteine 525, and cysteine 511–cysteine 538. Residue asparagine 221 is glycosylated (N-linked (GlcNAc...) asparagine). N-linked (GlcNAc...) asparagine glycosylation is found at asparagine 506 and asparagine 528.

As to quaternary structure, disulfide-linked complex of alpha and beta chains of 3 possible sorts: a 570 kDa complex of 7 alpha chains and 1 beta chain, a 530 kDa homoheptamer of alpha chains or a 500 kDa complex of 6 alpha chains and 1 beta chain. The central body of the alpha chain homomer supports tentacles, each with the binding site for C4b at the end. (Microbial infection) Interacts with Staphylococcus aureus protein SdrE; this interaction inhibits complement-mediated bacterial opsonization. Chylomicrons in the plasma.

It is found in the secreted. Its function is as follows. Controls the classical pathway of complement activation. It binds as a cofactor to C3b/C4b inactivator (C3bINA), which then hydrolyzes the complement fragment C4b. It also accelerates the degradation of the C4bC2a complex (C3 convertase) by dissociating the complement fragment C2a. Alpha chain binds C4b. It also interacts with anticoagulant protein S and with serum amyloid P component. This Homo sapiens (Human) protein is C4b-binding protein alpha chain (C4BPA).